The chain runs to 234 residues: Glucosamine-6-phosphate deaminase (234 aa).

Asp62 acts as the Proton acceptor; for enolization step in catalysis. The active-site For ring-opening step is Asn128. The Proton acceptor; for ring-opening step role is filled by His130. Catalysis depends on Glu135, which acts as the For ring-opening step.

Belongs to the glucosamine/galactosamine-6-phosphate isomerase family. NagB subfamily.

The catalysed reaction is alpha-D-glucosamine 6-phosphate + H2O = beta-D-fructose 6-phosphate + NH4(+). It participates in amino-sugar metabolism; N-acetylneuraminate degradation; D-fructose 6-phosphate from N-acetylneuraminate: step 5/5. Catalyzes the reversible isomerization-deamination of glucosamine 6-phosphate (GlcN6P) to form fructose 6-phosphate (Fru6P) and ammonium ion. The protein is Glucosamine-6-phosphate deaminase of Lactobacillus delbrueckii subsp. bulgaricus (strain ATCC 11842 / DSM 20081 / BCRC 10696 / JCM 1002 / NBRC 13953 / NCIMB 11778 / NCTC 12712 / WDCM 00102 / Lb 14).